The primary structure comprises 479 residues: F-box protein At5g51380 (479 aa).

The interval 1 to 20 (MTFREKMPTSPKSPLRRRRS) is disordered. Positions 62-108 (DRTLSLSDSLLLKILEKLPESQNEDVSLVCKRWLSVQGRRLRSMKVF) constitute an F-box domain.

This Arabidopsis thaliana (Mouse-ear cress) protein is F-box protein At5g51380.